A 216-amino-acid polypeptide reads, in one-letter code: Pyrophosphatase PpaX (216 aa).

Asp-9 (nucleophile) is an active-site residue.

Belongs to the HAD-like hydrolase superfamily. PpaX family. It depends on Mg(2+) as a cofactor.

The enzyme catalyses diphosphate + H2O = 2 phosphate + H(+). Hydrolyzes pyrophosphate formed during P-Ser-HPr dephosphorylation by HPrK/P. Might play a role in controlling the intracellular pyrophosphate pool. This chain is Pyrophosphatase PpaX, found in Bacillus anthracis (strain CDC 684 / NRRL 3495).